Reading from the N-terminus, the 204-residue chain is Cell wall protein RHD3 (204 aa).

The N-terminal stretch at 1–15 (MKFLAILSLSSSALA) is a signal peptide. A lipid anchor (GPI-anchor amidated glycine) is attached at Gly182. Residues 183 to 204 (AAGQNKLSYGVGMAAVVAGLVM) constitute a propeptide, removed in mature form.

This sequence belongs to the SRP1/TIP1 family. In terms of processing, the GPI-anchor is attached to the protein in the endoplasmic reticulum and serves to target the protein to the cell surface. There, the glucosamine-inositol phospholipid moiety is cleaved off and the GPI-modified mannoprotein is covalently attached via its lipidless GPI glycan remnant to the 1,6-beta-glucan of the outer cell wall layer. Post-translationally, O-glycosylated by PMT1.

It localises to the secreted. Its subcellular location is the cell wall. The protein localises to the membrane. Its function is as follows. Component of the cell wall involved in virulence. Does not seem to have a major role in maintaining cell wall integrity but plays a role in the relationship between C.albicans and the host. The polypeptide is Cell wall protein RHD3 (RHD3) (Candida albicans (strain SC5314 / ATCC MYA-2876) (Yeast)).